Here is a 1024-residue protein sequence, read N- to C-terminus: Multidrug resistance protein MdtC (1024 aa).

Helical transmembrane passes span 12 to 32, 333 to 353, 360 to 380, 387 to 407, 435 to 455, 469 to 489, 528 to 548, 853 to 873, 875 to 895, 897 to 917, 953 to 973, and 984 to 1004; these read VATTLLTLAITLSGIIGFSLL, EVERSLVIAVALVILVVFIFL, LIPAVAVPVSLIGTFAAMYLC, LSLMALTIATGFVVDDAIVVL, VLSMSISLVAVFIPLLLMAGL, VAIGISLVISLTLTPMMCAWL, WVMVVLLSTIALNVWLYISIP, LWLIMAAIATVYIVLGILYES, VHPLTILSTLPSAGVGALLAL, LFDAPFSLIALIGIMLLIGIV, PIIMTTLAALFGALPLVLSSG, and ITIVGGLVVSQLLTLYTTPVI.

Belongs to the resistance-nodulation-cell division (RND) (TC 2.A.6) family. MdtC subfamily. In terms of assembly, part of a tripartite efflux system composed of MdtA, MdtB and MdtC. MdtC forms a heteromultimer with MdtB.

The protein localises to the cell inner membrane. This chain is Multidrug resistance protein MdtC, found in Yersinia pestis bv. Antiqua (strain Antiqua).